A 326-amino-acid polypeptide reads, in one-letter code: dTDP-4-dehydro-6-deoxy-D-allose reductase (326 aa).

Residues 15–21 (GALGFIG) and 129–132 (MSSS) each bind NAD(+). Tyr-160 functions as the Proton donor/acceptor in the catalytic mechanism. NAD(+) contacts are provided by residues Lys-164 and 187–190 (PGNV).

The protein belongs to the NAD(P)-dependent epimerase/dehydratase family.

The enzyme catalyses dTDP-6-deoxy-alpha-D-allose + NAD(+) = dTDP-4-dehydro-6-deoxy-alpha-D-allose + NADH + H(+). The catalysed reaction is dTDP-6-deoxy-alpha-D-allose + NADP(+) = dTDP-4-dehydro-6-deoxy-alpha-D-allose + NADPH + H(+). Functionally, catalyzes the stereospecific reduction of the C-4 keto group of dTDP-4-dehydro-6-deoxy-D-allose, leading to dTDP-6-deoxy-D-allose, an intermediate in the biosynthesis of the mycinose moiety of dihydrochalcomycin (GERI-155) antibiotic. Cannot directly reduce dTDP-4-dehydro-6-deoxyglucose, and thus acts after the epimerization step catalyzed by GerF. The chain is dTDP-4-dehydro-6-deoxy-D-allose reductase (gerKI) from Streptomyces sp.